The sequence spans 625 residues: MASTLISSLAVVLPLTLLAPSMSMKISRIDVLGYICNNGTVSNEEAYRRSYQINLDAIRGDMRHVKFGTHEHGDPPERMYVLSQCVSDLSSDECSLCWSRATDLLSQCFPATGGWFHLDGCFVRADNYSFYQEPVSHQDTKICASDKEKSAEFKGLVKEVTKSIVEAAPYSRGFSVAKMGIRDLTVYGLGVCWRTLNDELCKLCLADGALSVTSCLPSKEGFALNAGCYLRYSNYTFYNERGLLAMSFTKENLTYIFVISMVGVLAIAAGFWCGKCFYMRTSPKKKIKGTKTKKFHLFGHLRIEKESESICTESHLMSFEYSTLKKATNNFNESCKLGVGGYGEVFKGTLSDGREIAIKRLHVSGKKPRDEIHNEIDVISRCQHKNLVRLLGCCFTNMNSFIVYEFLANTSLDHILFNPEKKKELDWKKRRTIILGTAEGLEYLHETCKIIHRDIKASNILLDLKYKPKISDFGLAKFYPEGGKDIPASSLSPSSIAGTLGYMAPEYISKGRLSNKIDAYSFGVLVLEITSGFRNNKFRSDNSLETLVTQVWKCFASNKMEEMIDKDMGEDTDKQEMKRVMQIGLLCTQESPQLRPTMSKVIQMVSSTDIVLPTPTKPPFLHDSM.

The signal sequence occupies residues 1-23 (MASTLISSLAVVLPLTLLAPSMS). Topologically, residues 24 to 252 (MKISRIDVLG…LLAMSFTKEN (229 aa)) are extracellular. Gnk2-homologous domains follow at residues 29 to 130 (IDVL…NYSF) and 135 to 237 (VSHQ…NYTF). Asparagine 38, asparagine 127, asparagine 234, and asparagine 252 each carry an N-linked (GlcNAc...) asparagine glycan. A helical transmembrane segment spans residues 253 to 273 (LTYIFVISMVGVLAIAAGFWC). The Cytoplasmic portion of the chain corresponds to 274 to 625 (GKCFYMRTSP…TKPPFLHDSM (352 aa)). Residues 331–621 (FNESCKLGVG…LPTPTKPPFL (291 aa)) enclose the Protein kinase domain. ATP is bound by residues 337–345 (LGVGGYGEV) and lysine 359. Tyrosine 404 carries the post-translational modification Phosphotyrosine. The active-site Proton acceptor is the aspartate 454. Residue serine 458 is modified to Phosphoserine. Phosphothreonine is present on threonine 499. Tyrosine 507 carries the post-translational modification Phosphotyrosine.

It belongs to the protein kinase superfamily. Ser/Thr protein kinase family. CRK subfamily.

It is found in the membrane. It carries out the reaction L-seryl-[protein] + ATP = O-phospho-L-seryl-[protein] + ADP + H(+). The enzyme catalyses L-threonyl-[protein] + ATP = O-phospho-L-threonyl-[protein] + ADP + H(+). The chain is Cysteine-rich receptor-like protein kinase 46 from Arabidopsis thaliana (Mouse-ear cress).